Here is a 562-residue protein sequence, read N- to C-terminus: Arginine--tRNA ligase (562 aa).

Positions 121 to 131 match the 'HIGH' region motif; it reads PNIAKPFSVGH.

The protein belongs to the class-I aminoacyl-tRNA synthetase family. As to quaternary structure, monomer.

It localises to the cytoplasm. The catalysed reaction is tRNA(Arg) + L-arginine + ATP = L-arginyl-tRNA(Arg) + AMP + diphosphate. This Streptococcus uberis (strain ATCC BAA-854 / 0140J) protein is Arginine--tRNA ligase.